Consider the following 269-residue polypeptide: MSEQMVKEKPERAVIVPKQNHVLEVKDLSIYYGNKQAVHHVNMDIEKNAVTALIGPSGCGKSTFLRNINRMNDLIPSARAEGEILYEGLNILGGNINVVSLRREIGMVFQKPNPFPKSIYANITHALKYAGERNKAVLDEIVEESLTKAALWDEVKDRLHSSALSLSGGQQQRLCIARTLAMKPAVLLLDEPASALDPISNAKIEELITGLKREYSIIIVTHNMQQALRVSDRTAFFLNGELVEYGQTEQIFTSPKKQKTEDYINGKFG.

An ABC transporter domain is found at 23–264 (LEVKDLSIYY…PKKQKTEDYI (242 aa)). 55–62 (GPSGCGKS) provides a ligand contact to ATP.

This sequence belongs to the ABC transporter superfamily. Phosphate importer (TC 3.A.1.7) family. The complex is composed of two ATP-binding proteins (PstB), two transmembrane proteins (PstC and PstA) and a solute-binding protein (PstS).

The protein localises to the cell membrane. The enzyme catalyses phosphate(out) + ATP + H2O = ADP + 2 phosphate(in) + H(+). In terms of biological role, part of the ABC transporter complex PstSACB involved in phosphate import. Responsible for energy coupling to the transport system. In Bacillus subtilis (strain 168), this protein is Phosphate import ATP-binding protein PstB 2.